We begin with the raw amino-acid sequence, 195 residues long: Shikimate kinase (195 aa).

26 to 31 is a binding site for ATP; it reads GSGKST. Ser-30 contributes to the Mg(2+) binding site. Substrate is bound by residues Asp-48, Arg-72, and Gly-94. Position 132 (Arg-132) interacts with ATP. Arg-151 contributes to the substrate binding site.

This sequence belongs to the shikimate kinase family. Monomer. Mg(2+) is required as a cofactor.

It is found in the cytoplasm. It carries out the reaction shikimate + ATP = 3-phosphoshikimate + ADP + H(+). The protein operates within metabolic intermediate biosynthesis; chorismate biosynthesis; chorismate from D-erythrose 4-phosphate and phosphoenolpyruvate: step 5/7. Catalyzes the specific phosphorylation of the 3-hydroxyl group of shikimic acid using ATP as a cosubstrate. This chain is Shikimate kinase, found in Synechococcus sp. (strain RCC307).